A 117-amino-acid chain; its full sequence is Large ribosomal subunit protein uL18 (117 aa).

This sequence belongs to the universal ribosomal protein uL18 family. Part of the 50S ribosomal subunit; part of the 5S rRNA/L5/L18/L25 subcomplex. Contacts the 5S and 23S rRNAs.

Its function is as follows. This is one of the proteins that bind and probably mediate the attachment of the 5S RNA into the large ribosomal subunit, where it forms part of the central protuberance. This chain is Large ribosomal subunit protein uL18, found in Methylococcus capsulatus (strain ATCC 33009 / NCIMB 11132 / Bath).